The chain runs to 279 residues: DegV domain-containing protein SAR1438 (279 aa).

Residues Q4–K278 form the DegV domain. Residues T61 and S93 each contribute to the hexadecanoate site.

In terms of biological role, may bind long-chain fatty acids, such as palmitate, and may play a role in lipid transport or fatty acid metabolism. This is DegV domain-containing protein SAR1438 from Staphylococcus aureus (strain MRSA252).